Reading from the N-terminus, the 141-residue chain is Large ribosomal subunit protein uL11A (141 aa).

It belongs to the universal ribosomal protein uL11 family. In terms of assembly, part of the ribosomal stalk of the 50S ribosomal subunit. Interacts with L10 and the large rRNA to form the base of the stalk. L10 forms an elongated spine to which L12 dimers bind in a sequential fashion forming a multimeric L10(L12)X complex. One or more lysine residues are methylated.

In terms of biological role, forms part of the ribosomal stalk which helps the ribosome interact with GTP-bound translation factors. The protein is Large ribosomal subunit protein uL11A of Halalkalibacterium halodurans (strain ATCC BAA-125 / DSM 18197 / FERM 7344 / JCM 9153 / C-125) (Bacillus halodurans).